We begin with the raw amino-acid sequence, 454 residues long: Apyrase (454 aa).

At 1–7 (MLNQNSH) the chain is on the cytoplasmic side. The chain crosses the membrane as a helical; Signal-anchor for type II membrane protein span at residues 8 to 28 (FIFIILAIFLVLPLSLLSKNV). Topologically, residues 29 to 454 (NAQIPLRRHL…TTNKIRVASS (426 aa)) are extracellular. 48-58 (VIFDAGSTGSR) is a binding site for ATP. N-linked (GlcNAc...) asparagine glycosylation is present at Asn-151. Glu-170 serves as the catalytic Proton acceptor. Residue 194–204 (ATIDLGGGSVQ) coordinates ATP. A glycan (N-linked (GlcNAc...) asparagine) is linked at Asn-262.

This sequence belongs to the GDA1/CD39 NTPase family. It depends on Ca(2+) as a cofactor. The N-terminus is blocked.

Its subcellular location is the membrane. It carries out the reaction a ribonucleoside 5'-triphosphate + 2 H2O = a ribonucleoside 5'-phosphate + 2 phosphate + 2 H(+). Catalyzes the hydrolysis of phosphoanhydride bonds of nucleoside tri- and di-phosphates. The protein is Apyrase (RROP1) of Solanum tuberosum (Potato).